A 423-amino-acid chain; its full sequence is Probable WRKY transcription factor 58 (423 aa).

Disordered regions lie at residues 91–128 (SSAH…AVHG), 142–171 (RNHY…DGYN), and 215–284 (IYKG…GVST). Composition is skewed to low complexity over residues 99 to 111 (QPRQ…PQRP) and 144 to 162 (HYNN…VVNV). Residues 161 to 225 (NVDKPADDGY…YKGQHDHERP (65 aa)) constitute a DNA-binding region (WRKY 1). Acidic residues predominate over residues 259 to 271 (DDDDDDDEDDEDL). A DNA-binding region (WRKY 2) is located at residues 300–365 (SEVDLLDDGY…YEGKHNHDVP (66 aa)).

Its subcellular location is the nucleus. Its function is as follows. Transcription factor. Interacts specifically with the W box (5'-(T)TGAC[CT]-3'), a frequently occurring elicitor-responsive cis-acting element. This is Probable WRKY transcription factor 58 (WRKY58) from Arabidopsis thaliana (Mouse-ear cress).